A 362-amino-acid chain; its full sequence is Probable dual-specificity RNA methyltransferase RlmN (362 aa).

E105 acts as the Proton acceptor in catalysis. A Radical SAM core domain is found at 111–344 (HEYGNSICVT…VTIRREQGHD (234 aa)). A disulfide bridge connects residues C118 and C349. Residues C125, C129, and C132 each coordinate [4Fe-4S] cluster. Residues 175–176 (GE), S207, 230–232 (SLH), and N306 contribute to the S-adenosyl-L-methionine site. Residue C349 is the S-methylcysteine intermediate of the active site.

The protein belongs to the radical SAM superfamily. RlmN family. The cofactor is [4Fe-4S] cluster.

It is found in the cytoplasm. The catalysed reaction is adenosine(2503) in 23S rRNA + 2 reduced [2Fe-2S]-[ferredoxin] + 2 S-adenosyl-L-methionine = 2-methyladenosine(2503) in 23S rRNA + 5'-deoxyadenosine + L-methionine + 2 oxidized [2Fe-2S]-[ferredoxin] + S-adenosyl-L-homocysteine. It carries out the reaction adenosine(37) in tRNA + 2 reduced [2Fe-2S]-[ferredoxin] + 2 S-adenosyl-L-methionine = 2-methyladenosine(37) in tRNA + 5'-deoxyadenosine + L-methionine + 2 oxidized [2Fe-2S]-[ferredoxin] + S-adenosyl-L-homocysteine. Its function is as follows. Specifically methylates position 2 of adenine 2503 in 23S rRNA and position 2 of adenine 37 in tRNAs. This Bacillus anthracis (strain A0248) protein is Probable dual-specificity RNA methyltransferase RlmN.